Reading from the N-terminus, the 207-residue chain is ATP-dependent Clp protease proteolytic subunit (207 aa).

The Nucleophile role is filled by Ser-111. His-136 is a catalytic residue.

Belongs to the peptidase S14 family. As to quaternary structure, fourteen ClpP subunits assemble into 2 heptameric rings which stack back to back to give a disk-like structure with a central cavity, resembling the structure of eukaryotic proteasomes.

Its subcellular location is the cytoplasm. The catalysed reaction is Hydrolysis of proteins to small peptides in the presence of ATP and magnesium. alpha-casein is the usual test substrate. In the absence of ATP, only oligopeptides shorter than five residues are hydrolyzed (such as succinyl-Leu-Tyr-|-NHMec, and Leu-Tyr-Leu-|-Tyr-Trp, in which cleavage of the -Tyr-|-Leu- and -Tyr-|-Trp bonds also occurs).. Its function is as follows. Cleaves peptides in various proteins in a process that requires ATP hydrolysis. Has a chymotrypsin-like activity. Plays a major role in the degradation of misfolded proteins. The sequence is that of ATP-dependent Clp protease proteolytic subunit from Aliivibrio salmonicida (strain LFI1238) (Vibrio salmonicida (strain LFI1238)).